The primary structure comprises 884 residues: Alanine--tRNA ligase (884 aa).

Zn(2+) is bound by residues His-574, His-578, Cys-675, and His-679.

Belongs to the class-II aminoacyl-tRNA synthetase family. It depends on Zn(2+) as a cofactor.

The protein resides in the cytoplasm. It catalyses the reaction tRNA(Ala) + L-alanine + ATP = L-alanyl-tRNA(Ala) + AMP + diphosphate. Its function is as follows. Catalyzes the attachment of alanine to tRNA(Ala) in a two-step reaction: alanine is first activated by ATP to form Ala-AMP and then transferred to the acceptor end of tRNA(Ala). Also edits incorrectly charged Ser-tRNA(Ala) and Gly-tRNA(Ala) via its editing domain. In Ralstonia nicotianae (strain ATCC BAA-1114 / GMI1000) (Ralstonia solanacearum), this protein is Alanine--tRNA ligase.